A 741-amino-acid polypeptide reads, in one-letter code: Multifunctional procollagen lysine hydroxylase and glycosyltransferase LH3 (741 aa).

A signal peptide spans 1–27 (MAASVPEPRLLLLLLLLLPPLPPVTSA). Residues 28 to 293 (SDRPRGANPV…FCNLNRRTLP (266 aa)) are required for glycosyltransferase activity. 47-49 (VAT) lines the UDP pocket. N-linked (GlcNAc...) asparagine glycosylation occurs at N66. Mn(2+) is bound by residues D115, D118, and H256. 115–117 (DSY) contributes to the UDP binding site. Position 259 to 262 (259 to 262 (GPTK)) interacts with UDP. 2 disulfides stabilise this stretch: C282–C285 and C382–C388. Residues 298-523 (PPRVLLAVFV…EFGRLLSTSH (226 aa)) are accessory region. An N-linked (GlcNAc...) asparagine glycan is attached at N551. Residues C566 and C701 are joined by a disulfide bond. 2-oxoglutarate contacts are provided by R602 and Y659. The Fe2OG dioxygenase domain occupies 650–741 (RAVMNFVVRY…RYIMVSFVDP (92 aa)). Fe cation-binding residues include H670 and D672. Residues 675-718 (TFTLNVALNHKGVDYEGGGCRFLRYDCRVSSPRKGWALLHPGRL) form an important for dimerization region. N679 contributes to the 2-oxoglutarate binding site. H722 contacts Fe cation. R732 is a 2-oxoglutarate binding site.

As to quaternary structure, homodimer. Requires Fe(2+) as cofactor. L-ascorbate is required as a cofactor. Mn(2+) serves as cofactor. In terms of tissue distribution, detected in heart and bone.

The protein localises to the rough endoplasmic reticulum. It localises to the endoplasmic reticulum lumen. Its subcellular location is the endoplasmic reticulum membrane. The protein resides in the secreted. It is found in the extracellular space. The enzyme catalyses L-lysyl-[collagen] + 2-oxoglutarate + O2 = (5R)-5-hydroxy-L-lysyl-[collagen] + succinate + CO2. It carries out the reaction (5R)-5-hydroxy-L-lysyl-[collagen] + UDP-alpha-D-galactose = (5R)-5-O-(beta-D-galactosyl)-5-hydroxy-L-lysyl-[collagen] + UDP + H(+). It catalyses the reaction (5R)-5-O-(beta-D-galactosyl)-5-hydroxy-L-lysyl-[collagen] + UDP-alpha-D-glucose = (5R)-5-O-[alpha-D-glucosyl-(1-&gt;2)-beta-D-galactosyl]-5-hydroxy-L-lysyl-[collagen] + UDP + H(+). Functionally, multifunctional enzyme that catalyzes a series of post-translational modifications on Lys residues in procollagen. Plays a redundant role in catalyzing the formation of hydroxylysine residues in -Xaa-Lys-Gly- sequences in collagens. Plays a redundant role in catalyzing the transfer of galactose onto hydroxylysine groups, giving rise to galactosyl 5-hydroxylysine. Has an essential role by catalyzing the subsequent transfer of glucose moieties, giving rise to 1,2-glucosylgalactosyl-5-hydroxylysine residues. Catalyzes hydroxylation and glycosylation of Lys residues in the MBL1 collagen-like domain, giving rise to hydroxylysine and 1,2-glucosylgalactosyl-5-hydroxylysine residues. Catalyzes hydroxylation and glycosylation of Lys residues in the ADIPOQ collagen-like domain, giving rise to hydroxylysine and 1,2-glucosylgalactosyl-5-hydroxylysine residues. Essential for normal biosynthesis and secretion of type IV collagens. Essential for normal formation of basement membranes. In Rattus norvegicus (Rat), this protein is Multifunctional procollagen lysine hydroxylase and glycosyltransferase LH3 (Plod3).